A 270-amino-acid chain; its full sequence is 4-hydroxy-tetrahydrodipicolinate reductase (270 aa).

An NAD(+)-binding site is contributed by G7–M12. Residue R34 coordinates NADP(+). Residues G97–T99 and S121–M124 contribute to the NAD(+) site. The Proton donor/acceptor role is filled by H155. H156 contacts (S)-2,3,4,5-tetrahydrodipicolinate. Residue K159 is the Proton donor of the active site. A (S)-2,3,4,5-tetrahydrodipicolinate-binding site is contributed by G165 to T166.

The protein belongs to the DapB family.

The protein resides in the cytoplasm. It catalyses the reaction (S)-2,3,4,5-tetrahydrodipicolinate + NAD(+) + H2O = (2S,4S)-4-hydroxy-2,3,4,5-tetrahydrodipicolinate + NADH + H(+). The catalysed reaction is (S)-2,3,4,5-tetrahydrodipicolinate + NADP(+) + H2O = (2S,4S)-4-hydroxy-2,3,4,5-tetrahydrodipicolinate + NADPH + H(+). The protein operates within amino-acid biosynthesis; L-lysine biosynthesis via DAP pathway; (S)-tetrahydrodipicolinate from L-aspartate: step 4/4. In terms of biological role, catalyzes the conversion of 4-hydroxy-tetrahydrodipicolinate (HTPA) to tetrahydrodipicolinate. In Bartonella tribocorum (strain CIP 105476 / IBS 506), this protein is 4-hydroxy-tetrahydrodipicolinate reductase.